The sequence spans 314 residues: MASPRRSEADLASPARGPGSGPPSPPHPGPDSARPLSRITSAAASPPPPGQRTAEPPTTISIPRTLWRLSIPLYITHPSLPNTPFITSLPRVSYLSLLLPRIRAFLPPSIPAPTSFHHEGIALRALPLGLLVDLYQPTLPWRLTVDQGDDWHVGDTFLNGVKEADFVRNGHAKQIMGMSKADTTALWNAVRDADYPAWARINARLLNPSTPIKHVPLRIYIPSSGGGGAGGATPAGSFRVMQTLVPPRTANRIPQTLGPTLRDLLPVLFPSSRDPVLANVVLHGAPVPFSAPLEGLMREAAYPDGWLCLTVVPL.

Residues 1 to 59 form a disordered region; that stretch reads MASPRRSEADLASPARGPGSGPPSPPHPGPDSARPLSRITSAAASPPPPGQRTAEPPTT. Residues 20–29 are compositionally biased toward pro residues; the sequence is SGPPSPPHPG. A Glycyl lysine isopeptide (Lys-Gly) (interchain with G-Cter in ATG12) cross-link involves residue K162.

The protein belongs to the ATG5 family. As to quaternary structure, conjugated with ATG12. Conjugated to ATG12; which is essential for autophagy.

It is found in the preautophagosomal structure membrane. Involved in cytoplasm to vacuole transport (Cvt) and autophagic vesicle formation. Autophagy is essential for maintenance of amino acid levels and protein synthesis under nitrogen starvation. Required for selective autophagic degradation of the nucleus (nucleophagy). Also required for mitophagy, which eliminates defective or superfluous mitochondria in order to fulfill cellular energy requirements and prevent excess ROS production. Conjugation with ATG12, through a ubiquitin-like conjugating system involving ATG7 as an E1-like activating enzyme and ATG10 as an E2-like conjugating enzyme, is essential for its function. The ATG12-ATG5 conjugate acts as an E3-like enzyme which is required for lipidation of ATG8 and ATG8 association to the vesicle membranes. Required for cell differentiation and pathogenesis. The chain is Autophagy protein 5 (ATG5) from Pyricularia oryzae (strain 70-15 / ATCC MYA-4617 / FGSC 8958) (Rice blast fungus).